A 127-amino-acid chain; its full sequence is Glycine cleavage system H protein (127 aa).

One can recognise a Lipoyl-binding domain in the interval E22 to E104. K63 carries the N6-lipoyllysine modification.

It belongs to the GcvH family. The glycine cleavage system is composed of four proteins: P, T, L and H. Requires (R)-lipoate as cofactor.

In terms of biological role, the glycine cleavage system catalyzes the degradation of glycine. The H protein shuttles the methylamine group of glycine from the P protein to the T protein. Its function is as follows. Is also involved in protein lipoylation via its role as an octanoyl/lipoyl carrier protein intermediate. This is Glycine cleavage system H protein from Bacillus cereus (strain B4264).